The sequence spans 457 residues: Heme sensor protein HssS (457 aa).

Helical transmembrane passes span 9 to 29 (IAIY…VLTN) and 164 to 184 (TFLA…VIAS). The HAMP domain occupies 186 to 238 (YSIIRPVKKLKLATERLIDGDFETPIKQTRKDEIGTLQYHFNKMRESLGQVDQ). The Histidine kinase domain maps to 246–456 (NVSHEIKTPL…TFTITLPNNS (211 aa)). Histidine 249 carries the phosphohistidine; by autocatalysis modification.

Autophosphorylated.

The protein localises to the cell membrane. It catalyses the reaction ATP + protein L-histidine = ADP + protein N-phospho-L-histidine.. Member of the two-component regulatory system HssS/HssR involved in intracellular heme homeostasis and tempering of staphylococcal virulence. HssS functions as a heme sensor histidine kinase which is autophosphorylated at a histidine residue and transfers its phosphate group to an aspartate residue of HssR. HssR/HssS activates the expression of hrtAB, an efflux pump, in response to extracellular heme, hemin, hemoglobin or blood. The sequence is that of Heme sensor protein HssS (hssS) from Staphylococcus aureus (strain MSSA476).